Here is a 491-residue protein sequence, read N- to C-terminus: Chromosomal replication initiator protein DnaA (491 aa).

The domain I, interacts with DnaA modulators stretch occupies residues 1–69 (MTTWDKCLKK…TIQECHGNDL (69 aa)). Residues 69-154 (LIIEYSNKKF…KEDEEYSFGL (86 aa)) are domain II. The tract at residues 155–371 (PLKEKYVFDS…GALNRVLTTS (217 aa)) is domain III, AAA+ region. 4 residues coordinate ATP: Gly-199, Gly-201, Lys-202, and Thr-203. The domain IV, binds dsDNA stretch occupies residues 372 to 491 (KFNHKDPTIE…YELLLDKISR (120 aa)).

The protein belongs to the DnaA family. Oligomerizes as a right-handed, spiral filament on DNA at oriC.

Its subcellular location is the cytoplasm. Functionally, plays an essential role in the initiation and regulation of chromosomal replication. ATP-DnaA binds to the origin of replication (oriC) to initiate formation of the DNA replication initiation complex once per cell cycle. Binds the DnaA box (a 9 base pair repeat at the origin) and separates the double-stranded (ds)DNA. Forms a right-handed helical filament on oriC DNA; dsDNA binds to the exterior of the filament while single-stranded (ss)DNA is stabiized in the filament's interior. The ATP-DnaA-oriC complex binds and stabilizes one strand of the AT-rich DNA unwinding element (DUE), permitting loading of DNA polymerase. After initiation quickly degrades to an ADP-DnaA complex that is not apt for DNA replication. Binds acidic phospholipids. The sequence is that of Chromosomal replication initiator protein DnaA from Francisella tularensis subsp. holarctica (strain LVS).